A 92-amino-acid chain; its full sequence is PqqA binding protein (92 aa).

Belongs to the PqqD family. Monomer. Interacts with PqqE.

It functions in the pathway cofactor biosynthesis; pyrroloquinoline quinone biosynthesis. Its function is as follows. Functions as a PqqA binding protein and presents PqqA to PqqE, in the pyrroloquinoline quinone (PQQ) biosynthetic pathway. In Xanthomonas oryzae pv. oryzae (strain MAFF 311018), this protein is PqqA binding protein.